The following is a 55-amino-acid chain: ATP synthase protein 8 (55 aa).

Residues 7 to 24 (NPWFFIMIISWLTYSMII) form a helical membrane-spanning segment. Residues 34–55 (TNPPARKEPTTNTTTPWNWPWT) form a disordered region. Low complexity predominate over residues 43–55 (TTNTTTPWNWPWT).

It belongs to the ATPase protein 8 family. F-type ATPases have 2 components, CF(1) - the catalytic core - and CF(0) - the membrane proton channel.

The protein localises to the mitochondrion membrane. Mitochondrial membrane ATP synthase (F(1)F(0) ATP synthase or Complex V) produces ATP from ADP in the presence of a proton gradient across the membrane which is generated by electron transport complexes of the respiratory chain. F-type ATPases consist of two structural domains, F(1) - containing the extramembraneous catalytic core and F(0) - containing the membrane proton channel, linked together by a central stalk and a peripheral stalk. During catalysis, ATP synthesis in the catalytic domain of F(1) is coupled via a rotary mechanism of the central stalk subunits to proton translocation. Part of the complex F(0) domain. Minor subunit located with subunit a in the membrane. This chain is ATP synthase protein 8 (MT-ATP8), found in Vireo altiloquus (Black-whiskered vireo).